Consider the following 266-residue polypeptide: Thymidylate synthase (266 aa).

Arg-24 contacts dUMP. Residue His-54 participates in (6R)-5,10-methylene-5,6,7,8-tetrahydrofolate binding. 129-130 is a binding site for dUMP; the sequence is RR. Residue Cys-149 is the Nucleophile of the active site. Residues 169–172, Asn-180, and 210–212 each bind dUMP; these read RSAD and HIY. Asp-172 contributes to the (6R)-5,10-methylene-5,6,7,8-tetrahydrofolate binding site. Position 265 (Ala-265) interacts with (6R)-5,10-methylene-5,6,7,8-tetrahydrofolate.

The protein belongs to the thymidylate synthase family. Bacterial-type ThyA subfamily. As to quaternary structure, homodimer.

The protein resides in the cytoplasm. The enzyme catalyses dUMP + (6R)-5,10-methylene-5,6,7,8-tetrahydrofolate = 7,8-dihydrofolate + dTMP. The protein operates within pyrimidine metabolism; dTTP biosynthesis. In terms of biological role, catalyzes the reductive methylation of 2'-deoxyuridine-5'-monophosphate (dUMP) to 2'-deoxythymidine-5'-monophosphate (dTMP) while utilizing 5,10-methylenetetrahydrofolate (mTHF) as the methyl donor and reductant in the reaction, yielding dihydrofolate (DHF) as a by-product. This enzymatic reaction provides an intracellular de novo source of dTMP, an essential precursor for DNA biosynthesis. The protein is Thymidylate synthase of Mycobacterium leprae (strain TN).